We begin with the raw amino-acid sequence, 271 residues long: Ribosomal RNA small subunit methyltransferase J (271 aa).

S-adenosyl-L-methionine contacts are provided by residues 116-117, 132-133, 168-169, and aspartate 190; these read RD, ER, and SS.

The protein belongs to the methyltransferase superfamily. RsmJ family.

Its subcellular location is the cytoplasm. The enzyme catalyses guanosine(1516) in 16S rRNA + S-adenosyl-L-methionine = N(2)-methylguanosine(1516) in 16S rRNA + S-adenosyl-L-homocysteine + H(+). Its function is as follows. Specifically methylates the guanosine in position 1516 of 16S rRNA. This Shewanella piezotolerans (strain WP3 / JCM 13877) protein is Ribosomal RNA small subunit methyltransferase J.